A 338-amino-acid polypeptide reads, in one-letter code: tRNA (cytidine(56)-2'-O)-methyltransferase (338 aa).

S-adenosyl-L-methionine-binding positions include Leu-79 and 105 to 109 (GSEKV). The HD domain occupies 188 to 295 (LINHVKSVKE…VAHADNLFAG (108 aa)).

It belongs to the aTrm56 family. Homodimer.

It localises to the cytoplasm. The catalysed reaction is cytidine(56) in tRNA + S-adenosyl-L-methionine = 2'-O-methylcytidine(56) in tRNA + S-adenosyl-L-homocysteine + H(+). Functionally, specifically catalyzes the AdoMet-dependent 2'-O-ribose methylation of cytidine at position 56 in tRNAs. The protein is tRNA (cytidine(56)-2'-O)-methyltransferase of Thermoplasma volcanium (strain ATCC 51530 / DSM 4299 / JCM 9571 / NBRC 15438 / GSS1).